The sequence spans 115 residues: Large ribosomal subunit protein bL19 (115 aa).

It belongs to the bacterial ribosomal protein bL19 family.

This protein is located at the 30S-50S ribosomal subunit interface and may play a role in the structure and function of the aminoacyl-tRNA binding site. The protein is Large ribosomal subunit protein bL19 of Bacillus pumilus (strain SAFR-032).